Reading from the N-terminus, the 519-residue chain is Glutamate--cysteine ligase (519 aa).

The protein belongs to the glutamate--cysteine ligase type 1 family. Type 1 subfamily.

It carries out the reaction L-cysteine + L-glutamate + ATP = gamma-L-glutamyl-L-cysteine + ADP + phosphate + H(+). The protein operates within sulfur metabolism; glutathione biosynthesis; glutathione from L-cysteine and L-glutamate: step 1/2. This chain is Glutamate--cysteine ligase, found in Photorhabdus laumondii subsp. laumondii (strain DSM 15139 / CIP 105565 / TT01) (Photorhabdus luminescens subsp. laumondii).